The sequence spans 79 residues: Sulfur carrier protein TusA (79 aa).

Cys-17 functions as the Cysteine persulfide intermediate in the catalytic mechanism.

The protein belongs to the sulfur carrier protein TusA family.

The protein resides in the cytoplasm. Sulfur carrier protein which probably makes part of a sulfur-relay system. The chain is Sulfur carrier protein TusA from Pasteurella multocida (strain Pm70).